The sequence spans 103 residues: UPF0145 protein EF_0241 (103 aa).

This sequence belongs to the UPF0145 family.

The polypeptide is UPF0145 protein EF_0241 (Enterococcus faecalis (strain ATCC 700802 / V583)).